The chain runs to 165 residues: Biosynthetic peptidoglycan transglycosylase (165 aa).

This sequence belongs to the glycosyltransferase 51 family.

It localises to the cell inner membrane. The catalysed reaction is [GlcNAc-(1-&gt;4)-Mur2Ac(oyl-L-Ala-gamma-D-Glu-L-Lys-D-Ala-D-Ala)](n)-di-trans,octa-cis-undecaprenyl diphosphate + beta-D-GlcNAc-(1-&gt;4)-Mur2Ac(oyl-L-Ala-gamma-D-Glu-L-Lys-D-Ala-D-Ala)-di-trans,octa-cis-undecaprenyl diphosphate = [GlcNAc-(1-&gt;4)-Mur2Ac(oyl-L-Ala-gamma-D-Glu-L-Lys-D-Ala-D-Ala)](n+1)-di-trans,octa-cis-undecaprenyl diphosphate + di-trans,octa-cis-undecaprenyl diphosphate + H(+). It functions in the pathway cell wall biogenesis; peptidoglycan biosynthesis. Peptidoglycan polymerase that catalyzes glycan chain elongation from lipid-linked precursors. The polypeptide is Biosynthetic peptidoglycan transglycosylase (Neisseria meningitidis).